We begin with the raw amino-acid sequence, 103 residues long: Small ribosomal subunit protein uS10c (103 aa).

It belongs to the universal ribosomal protein uS10 family. In terms of assembly, part of the 30S ribosomal subunit.

It is found in the plastid. Its subcellular location is the chloroplast. Functionally, involved in the binding of tRNA to the ribosomes. The protein is Small ribosomal subunit protein uS10c of Emiliania huxleyi (Coccolithophore).